A 269-amino-acid polypeptide reads, in one-letter code: CCAAT/enhancer-binding protein delta (269 aa).

Disordered stretches follow at residues 1–48, 97–133, and 151–219; these read MSAA…PGAA, PLELLPGGPARPLGPGPAAPRLLKREPDWGDGDAPGS, and AAGQ…NQEM. N-acetylserine is present on Ser-2. Composition is skewed to low complexity over residues 36–48 and 97–107; these read GAEPGALGEPGAA and PLELLPGGPAR. Residue Lys-120 forms a Glycyl lysine isopeptide (Lys-Gly) (interchain with G-Cter in SUMO) linkage. A compositionally biased stretch (pro residues) spans 155 to 175; it reads PTPPTSPEPPRSSPRQTPAPG. A compositionally biased stretch (basic and acidic residues) spans 177–201; the sequence is AREKSAGKRGPDRGSPEYRQRRERN. The 64-residue stretch at 191–254 folds into the bZIP domain; sequence SPEYRQRRER…AGLRQFFKQL (64 aa). Residues 195–222 are basic motif; it reads RQRRERNNIAVRKSRDKAKRRNQEMQQK. A leucine-zipper region spans residues 226–254; sequence LSAENEKLHQRVEQLTRDLAGLRQFFKQL.

Belongs to the bZIP family. C/EBP subfamily. As to quaternary structure, binds DNA as a homodimer and as a heterodimer. Can form stable heterodimers with CEBPB. Can form stable heterodimers with CEBPA and CEBPE. Directly interacts with SPI1/PU.1; this interaction does not affect DNA-binding properties of each partner. Interacts with PRDM16.

Its subcellular location is the nucleus. Functionally, transcription activator that recognizes two different DNA motifs: the CCAAT homology common to many promoters and the enhanced core homology common to many enhancers. Important transcription factor regulating the expression of genes involved in immune and inflammatory responses. Transcriptional activator that enhances IL6 transcription alone and as heterodimer with CEBPB. The chain is CCAAT/enhancer-binding protein delta (CEBPD) from Homo sapiens (Human).